The sequence spans 164 residues: Phosphopantetheine adenylyltransferase (164 aa).

S11 serves as a coordination point for substrate. ATP-binding positions include 11-12 and H19; that span reads SF. 3 residues coordinate substrate: K43, A76, and R90. ATP is bound by residues 91 to 93, E101, and 126 to 132; these read GLR and YQHISSS.

This sequence belongs to the bacterial CoaD family. In terms of assembly, homohexamer. Requires Mg(2+) as cofactor.

The protein resides in the cytoplasm. It catalyses the reaction (R)-4'-phosphopantetheine + ATP + H(+) = 3'-dephospho-CoA + diphosphate. It functions in the pathway cofactor biosynthesis; coenzyme A biosynthesis; CoA from (R)-pantothenate: step 4/5. Reversibly transfers an adenylyl group from ATP to 4'-phosphopantetheine, yielding dephospho-CoA (dPCoA) and pyrophosphate. The protein is Phosphopantetheine adenylyltransferase of Streptococcus sanguinis (strain SK36).